Consider the following 878-residue polypeptide: Alanine--tRNA ligase (878 aa).

4 residues coordinate Zn(2+): histidine 564, histidine 568, cysteine 665, and histidine 669.

It belongs to the class-II aminoacyl-tRNA synthetase family. Zn(2+) is required as a cofactor.

The protein localises to the cytoplasm. The catalysed reaction is tRNA(Ala) + L-alanine + ATP = L-alanyl-tRNA(Ala) + AMP + diphosphate. Its function is as follows. Catalyzes the attachment of alanine to tRNA(Ala) in a two-step reaction: alanine is first activated by ATP to form Ala-AMP and then transferred to the acceptor end of tRNA(Ala). Also edits incorrectly charged Ser-tRNA(Ala) and Gly-tRNA(Ala) via its editing domain. This Natranaerobius thermophilus (strain ATCC BAA-1301 / DSM 18059 / JW/NM-WN-LF) protein is Alanine--tRNA ligase.